The primary structure comprises 804 residues: Phenylalanine--tRNA ligase beta subunit (804 aa).

The 116-residue stretch at Gly-40–Leu-155 folds into the tRNA-binding domain. In terms of domain architecture, B5 spans Ile-409–Ser-484. Residues Asp-462, Asp-468, Glu-471, and Glu-472 each contribute to the Mg(2+) site. Residues Pro-710–Arg-803 enclose the FDX-ACB domain.

This sequence belongs to the phenylalanyl-tRNA synthetase beta subunit family. Type 1 subfamily. In terms of assembly, tetramer of two alpha and two beta subunits. Mg(2+) is required as a cofactor.

It localises to the cytoplasm. It carries out the reaction tRNA(Phe) + L-phenylalanine + ATP = L-phenylalanyl-tRNA(Phe) + AMP + diphosphate + H(+). The protein is Phenylalanine--tRNA ligase beta subunit (pheT) of Bacillus subtilis (strain 168).